A 118-amino-acid chain; its full sequence is Small ribosomal subunit protein uS13 (118 aa).

Residues 94–118 (GLPVRGQRTKTNARTRKGPRKPIKK) are disordered.

This sequence belongs to the universal ribosomal protein uS13 family. As to quaternary structure, part of the 30S ribosomal subunit. Forms a loose heterodimer with protein S19. Forms two bridges to the 50S subunit in the 70S ribosome.

Located at the top of the head of the 30S subunit, it contacts several helices of the 16S rRNA. In the 70S ribosome it contacts the 23S rRNA (bridge B1a) and protein L5 of the 50S subunit (bridge B1b), connecting the 2 subunits; these bridges are implicated in subunit movement. Contacts the tRNAs in the A and P-sites. The polypeptide is Small ribosomal subunit protein uS13 (Klebsiella pneumoniae (strain 342)).